The sequence spans 313 residues: Dimethyladenosine transferase (313 aa).

The interval 1–21 is disordered; that stretch reads MPKVKSGAIGRRRGRQEQRRE. Positions 37, 39, 64, 85, 113, and 128 each coordinate S-adenosyl-L-methionine.

Belongs to the class I-like SAM-binding methyltransferase superfamily. rRNA adenine N(6)-methyltransferase family. As to quaternary structure, part of the small subunit (SSU) processome, composed of more than 70 proteins and the RNA chaperone small nucleolar RNA (snoRNA) U3.

It is found in the nucleus. Its subcellular location is the nucleoplasm. It localises to the nucleolus. It catalyses the reaction adenosine(1779)/adenosine(1780) in 18S rRNA + 4 S-adenosyl-L-methionine = N(6)-dimethyladenosine(1779)/N(6)-dimethyladenosine(1780) in 18S rRNA + 4 S-adenosyl-L-homocysteine + 4 H(+). Its function is as follows. Specifically dimethylates two adjacent adenosines in the loop of a conserved hairpin near the 3'-end of 18S rRNA in the 40S particle. Involved in the pre-rRNA processing steps leading to small-subunit rRNA production independently of its RNA-modifying catalytic activity. Part of the small subunit (SSU) processome, first precursor of the small eukaryotic ribosomal subunit. During the assembly of the SSU processome in the nucleolus, many ribosome biogenesis factors, an RNA chaperone and ribosomal proteins associate with the nascent pre-rRNA and work in concert to generate RNA folding, modifications, rearrangements and cleavage as well as targeted degradation of pre-ribosomal RNA by the RNA exosome. The polypeptide is Dimethyladenosine transferase (DIMT1) (Macaca fascicularis (Crab-eating macaque)).